A 458-amino-acid polypeptide reads, in one-letter code: UPF0210 protein MmarC5_0151 (458 aa).

This sequence belongs to the UPF0210 family.

The sequence is that of UPF0210 protein MmarC5_0151 from Methanococcus maripaludis (strain C5 / ATCC BAA-1333).